Consider the following 337-residue polypeptide: UDP-3-O-acylglucosamine N-acyltransferase (337 aa).

Histidine 238 acts as the Proton acceptor in catalysis.

The protein belongs to the transferase hexapeptide repeat family. LpxD subfamily. In terms of assembly, homotrimer.

It catalyses the reaction a UDP-3-O-[(3R)-3-hydroxyacyl]-alpha-D-glucosamine + a (3R)-hydroxyacyl-[ACP] = a UDP-2-N,3-O-bis[(3R)-3-hydroxyacyl]-alpha-D-glucosamine + holo-[ACP] + H(+). The protein operates within bacterial outer membrane biogenesis; LPS lipid A biosynthesis. Catalyzes the N-acylation of UDP-3-O-acylglucosamine using 3-hydroxyacyl-ACP as the acyl donor. Is involved in the biosynthesis of lipid A, a phosphorylated glycolipid that anchors the lipopolysaccharide to the outer membrane of the cell. In Xanthomonas axonopodis pv. citri (strain 306), this protein is UDP-3-O-acylglucosamine N-acyltransferase.